The primary structure comprises 298 residues: Probable endonuclease 4 (298 aa).

The Zn(2+) site is built by His-69, His-111, Glu-146, Asp-180, His-183, His-215, Asp-228, His-230, and Glu-260.

This sequence belongs to the AP endonuclease 2 family. Zn(2+) is required as a cofactor.

It catalyses the reaction Endonucleolytic cleavage to 5'-phosphooligonucleotide end-products.. Endonuclease IV plays a role in DNA repair. It cleaves phosphodiester bonds at apurinic or apyrimidinic (AP) sites, generating a 3'-hydroxyl group and a 5'-terminal sugar phosphate. The protein is Probable endonuclease 4 of Bacillus cereus (strain B4264).